We begin with the raw amino-acid sequence, 297 residues long: Putative S-adenosyl-L-methionine-dependent methyltransferase Mjls_1072 (297 aa).

S-adenosyl-L-methionine contacts are provided by residues Asp-124 and 153-154 (DL).

It belongs to the UPF0677 family.

Exhibits S-adenosyl-L-methionine-dependent methyltransferase activity. The chain is Putative S-adenosyl-L-methionine-dependent methyltransferase Mjls_1072 from Mycobacterium sp. (strain JLS).